A 227-amino-acid polypeptide reads, in one-letter code: Uracil-DNA glycosylase (227 aa).

D68 (proton acceptor) is an active-site residue.

It belongs to the uracil-DNA glycosylase (UDG) superfamily. UNG family.

It is found in the cytoplasm. It catalyses the reaction Hydrolyzes single-stranded DNA or mismatched double-stranded DNA and polynucleotides, releasing free uracil.. Functionally, excises uracil residues from the DNA which can arise as a result of misincorporation of dUMP residues by DNA polymerase or due to deamination of cytosine. This chain is Uracil-DNA glycosylase, found in Mycolicibacterium paratuberculosis (strain ATCC BAA-968 / K-10) (Mycobacterium paratuberculosis).